The sequence spans 449 residues: Heterogeneous nuclear ribonucleoprotein H2 (449 aa).

An N-acetylmethionine modification is found at M1. M2 is subject to N-acetylmethionine; in Heterogeneous nuclear ribonucleoprotein H2, N-terminally processed. In terms of domain architecture, RRM 1 spans 11 to 90; that stretch reads FVVKVRGLPW…RYVEVFKSNS (80 aa). At S23 the chain carries Phosphoserine. K35 participates in a covalent cross-link: Glycyl lysine isopeptide (Lys-Gly) (interchain with G-Cter in SUMO2). S54 and S63 each carry phosphoserine. K87 participates in a covalent cross-link: Glycyl lysine isopeptide (Lys-Gly) (interchain with G-Cter in SUMO2). Residue S90 is modified to Phosphoserine. K98 is covalently cross-linked (Glycyl lysine isopeptide (Lys-Gly) (interchain with G-Cter in SUMO2)). The region spanning 111–188 is the RRM 2 domain; sequence GFVRLRGLPF…RYIEIFKSSR (78 aa). R233 carries the dimethylated arginine; alternate modification. R233 is subject to Omega-N-methylarginine; alternate. The stretch at 234–249 is one 1-1 repeat; it reads GAYGGGYGGYDDYGGY. The segment at 234–433 is 2 X 16 AA Gly-rich approximate repeats; that stretch reads GAYGGGYGGY…YGGQSSMSGY (200 aa). Position 246 is a phosphotyrosine (Y246). The RRM 3 domain occupies 289–364; the sequence is HCVHMRGLPY…RYVELFLNST (76 aa). S310 carries the phosphoserine modification. Tandem repeats lie at residues 354 to 372, 374 to 392, and 418 to 433. The segment at 354-392 is 2 X 19 AA perfect repeats; that stretch reads HRYVELFLNSTAGTSGGAYDHSYVELFLNSTAGASGGAY.

In terms of assembly, component of a ribonucleoprotein complex containing mRNAs and RNA-binding proteins including DDX5, HNRNPH2 and SRSF1 as well as splicing regulator ARVCF. Interacts with TXNL4/DIM1. Expressed ubiquitously.

The protein localises to the nucleus. It is found in the nucleoplasm. In terms of biological role, this protein is a component of the heterogeneous nuclear ribonucleoprotein (hnRNP) complexes which provide the substrate for the processing events that pre-mRNAs undergo before becoming functional, translatable mRNAs in the cytoplasm. Binds poly(RG). The protein is Heterogeneous nuclear ribonucleoprotein H2 (HNRNPH2) of Homo sapiens (Human).